The following is a 233-amino-acid chain: Large ribosomal subunit protein uL1 (233 aa).

This sequence belongs to the universal ribosomal protein uL1 family. Part of the 50S ribosomal subunit.

Functionally, binds directly to 23S rRNA. The L1 stalk is quite mobile in the ribosome, and is involved in E site tRNA release. In terms of biological role, protein L1 is also a translational repressor protein, it controls the translation of the L11 operon by binding to its mRNA. The chain is Large ribosomal subunit protein uL1 from Polynucleobacter necessarius subsp. necessarius (strain STIR1).